The sequence spans 332 residues: tRNA dimethylallyltransferase (332 aa).

Residue 17–24 (GPTCSGKS) coordinates ATP. 19 to 24 (TCSGKS) serves as a coordination point for substrate. 2 interaction with substrate tRNA regions span residues 42-45 (DSMQ) and 166-170 (QRVAR).

The protein belongs to the IPP transferase family. In terms of assembly, monomer. Mg(2+) serves as cofactor.

The catalysed reaction is adenosine(37) in tRNA + dimethylallyl diphosphate = N(6)-dimethylallyladenosine(37) in tRNA + diphosphate. Catalyzes the transfer of a dimethylallyl group onto the adenine at position 37 in tRNAs that read codons beginning with uridine, leading to the formation of N6-(dimethylallyl)adenosine (i(6)A). The chain is tRNA dimethylallyltransferase from Gluconacetobacter diazotrophicus (strain ATCC 49037 / DSM 5601 / CCUG 37298 / CIP 103539 / LMG 7603 / PAl5).